We begin with the raw amino-acid sequence, 387 residues long: Succinate--CoA ligase [ADP-forming] subunit beta (387 aa).

In terms of domain architecture, ATP-grasp spans 9–244; the sequence is KQLFAEYGIP…KTQEDETEVL (236 aa). Residues lysine 46, 53-55, glycine 102, and glutamate 107 each bind ATP; that span reads GRG. Mg(2+) contacts are provided by asparagine 199 and aspartate 213. Substrate is bound by residues asparagine 264 and 321 to 323; that span reads GIV.

It belongs to the succinate/malate CoA ligase beta subunit family. In terms of assembly, heterotetramer of two alpha and two beta subunits. Mg(2+) is required as a cofactor.

It carries out the reaction succinate + ATP + CoA = succinyl-CoA + ADP + phosphate. It catalyses the reaction GTP + succinate + CoA = succinyl-CoA + GDP + phosphate. The protein operates within carbohydrate metabolism; tricarboxylic acid cycle; succinate from succinyl-CoA (ligase route): step 1/1. Succinyl-CoA synthetase functions in the citric acid cycle (TCA), coupling the hydrolysis of succinyl-CoA to the synthesis of either ATP or GTP and thus represents the only step of substrate-level phosphorylation in the TCA. The beta subunit provides nucleotide specificity of the enzyme and binds the substrate succinate, while the binding sites for coenzyme A and phosphate are found in the alpha subunit. In Xylella fastidiosa (strain 9a5c), this protein is Succinate--CoA ligase [ADP-forming] subunit beta.